A 475-amino-acid chain; its full sequence is Protein transport protein Sec61 subunit alpha (475 aa).

10 consecutive transmembrane segments (helical) span residues 33-53, 76-96, 118-138, 145-165, 173-193, 241-261, 289-309, 354-374, 420-440, and 441-461; these read LWTAITLFIFLVCCQIPLFGI, LMELGITPIVTSGLIMQLLAG, LFGMIITIGQAVVYVMTGMYG, AGICLLIIIQLFIASLIVLLL, YGLGSGISLFIATNICETIVW, NLMNLSATILVFGIVIYFQGF, IPIILQSALVSGLYVISQMLA, FLDPIHGLLYITFMLGSCAFF, AAFGGLCIGALSVLADFIGAI, and GSGTGILLAVTIIYQYFEIFV.

The protein belongs to the SecY/SEC61-alpha family. In terms of assembly, the SEC61 channel-forming translocon complex consists of channel-forming core components SEC61A1, SEC61B and SEC61G and different auxiliary components such as SEC62 and SEC63. The SEC61 channel associates with the multi-pass translocon (MPT) complex. In terms of tissue distribution, expressed predominantly in epidermal cells of the embryo.

Its subcellular location is the endoplasmic reticulum membrane. In terms of biological role, component of SEC61 channel-forming translocon complex that mediates transport of signal peptide-containing precursor polypeptides across the endoplasmic reticulum (ER). Forms a ribosome receptor and a gated pore in the ER membrane, both functions required for cotranslational translocation of nascent polypeptides. May cooperate with auxiliary protein SEC62, SEC63 and HSPA5/BiP to enable post-translational transport of small presecretory proteins. The SEC61 channel is also involved in ER membrane insertion of transmembrane proteins: it mediates membrane insertion of the first few transmembrane segments of proteins, while insertion of subsequent transmembrane regions of multi-pass membrane proteins is mediated by the multi-pass translocon (MPT) complex. The chain is Protein transport protein Sec61 subunit alpha from Halocynthia roretzi (Sea squirt).